The sequence spans 252 residues: Ribosomal RNA small subunit methyltransferase J (252 aa).

S-adenosyl-L-methionine-binding positions include 101 to 102 (RD), 117 to 118 (ER), 153 to 154 (SS), and Asp-171.

It belongs to the methyltransferase superfamily. RsmJ family.

The protein localises to the cytoplasm. The enzyme catalyses guanosine(1516) in 16S rRNA + S-adenosyl-L-methionine = N(2)-methylguanosine(1516) in 16S rRNA + S-adenosyl-L-homocysteine + H(+). Its function is as follows. Specifically methylates the guanosine in position 1516 of 16S rRNA. In Salmonella heidelberg (strain SL476), this protein is Ribosomal RNA small subunit methyltransferase J.